We begin with the raw amino-acid sequence, 270 residues long: Chymotrypsin-like elastase family member 3A (270 aa).

Positions 1–15 (MMLRLLSSLLLVAVA) form a signal peptide, or 16. A propeptide spans 16 to 28 (SGYGPPSSHSSSR) (activation peptide). A Peptidase S1 domain is found at 29 to 268 (VVHGEDAVPY…FIDWIEETIA (240 aa)). Residues Cys58 and Cys74 are joined by a disulfide bond. Catalysis depends on His73, which acts as the Charge relay system. Asn114 carries N-linked (GlcNAc...) asparagine glycosylation. A disulfide bridge connects residues Cys117 and Cys120. The active-site Charge relay system is the Asp123. Cystine bridges form between Cys157-Cys223, Cys188-Cys204, and Cys213-Cys244. Ser217 functions as the Charge relay system in the catalytic mechanism.

It belongs to the peptidase S1 family. Elastase subfamily.

The catalysed reaction is Preferential cleavage: Ala-|-Xaa. Does not hydrolyze elastin.. In terms of biological role, efficient protease with alanine specificity but only little elastolytic activity. In Homo sapiens (Human), this protein is Chymotrypsin-like elastase family member 3A (CELA3A).